The chain runs to 33 residues: uncharacterized protein (33 aa).

Residues 11–31 (LALVIYMSVVLLLMVGVPLLF) traverse the membrane as a helical segment.

It localises to the membrane. This is an uncharacterized protein from Saccharomyces cerevisiae (strain ATCC 204508 / S288c) (Baker's yeast).